The following is a 72-amino-acid chain: uncharacterized protein (72 aa).

Residues 46 to 66 form a helical membrane-spanning segment; it reads AIFVFNLCFIPNLCVACIFNV.

The protein localises to the membrane. This is an uncharacterized protein from Saccharomyces cerevisiae (strain ATCC 204508 / S288c) (Baker's yeast).